Here is a 221-residue protein sequence, read N- to C-terminus: Ribosomal RNA small subunit methyltransferase G (221 aa).

S-adenosyl-L-methionine-binding positions include G90, L95, V141–E142, and R154.

It belongs to the methyltransferase superfamily. RNA methyltransferase RsmG family.

It localises to the cytoplasm. The enzyme catalyses guanosine(527) in 16S rRNA + S-adenosyl-L-methionine = N(7)-methylguanosine(527) in 16S rRNA + S-adenosyl-L-homocysteine. Specifically methylates the N7 position of guanine in position 527 of 16S rRNA. In Polaromonas naphthalenivorans (strain CJ2), this protein is Ribosomal RNA small subunit methyltransferase G.